The chain runs to 622 residues: UvrABC system protein C (622 aa).

Positions 12–91 (SSPGVYIMKD…IKKYRPKYNF (80 aa)) constitute a GIY-YIG domain. Positions 201–236 (REILKIFRERMSAAAAAEKYEKAARFRDLIRSIEVT) constitute a UVR domain.

Belongs to the UvrC family. As to quaternary structure, interacts with UvrB in an incision complex.

It is found in the cytoplasm. The UvrABC repair system catalyzes the recognition and processing of DNA lesions. UvrC both incises the 5' and 3' sides of the lesion. The N-terminal half is responsible for the 3' incision and the C-terminal half is responsible for the 5' incision. This Geotalea daltonii (strain DSM 22248 / JCM 15807 / FRC-32) (Geobacter daltonii) protein is UvrABC system protein C.